The chain runs to 249 residues: Enolase-phosphatase E1 (249 aa).

Belongs to the HAD-like hydrolase superfamily. MasA/MtnC family. Monomer. The cofactor is Mg(2+).

The enzyme catalyses 5-methylsulfanyl-2,3-dioxopentyl phosphate + H2O = 1,2-dihydroxy-5-(methylsulfanyl)pent-1-en-3-one + phosphate. Its pathway is amino-acid biosynthesis; L-methionine biosynthesis via salvage pathway; L-methionine from S-methyl-5-thio-alpha-D-ribose 1-phosphate: step 3/6. The protein operates within amino-acid biosynthesis; L-methionine biosynthesis via salvage pathway; L-methionine from S-methyl-5-thio-alpha-D-ribose 1-phosphate: step 4/6. In terms of biological role, bifunctional enzyme that catalyzes the enolization of 2,3-diketo-5-methylthiopentyl-1-phosphate (DK-MTP-1-P) into the intermediate 2-hydroxy-3-keto-5-methylthiopentenyl-1-phosphate (HK-MTPenyl-1-P), which is then dephosphorylated to form the acireductone 1,2-dihydroxy-3-keto-5-methylthiopentene (DHK-MTPene). This Synechococcus sp. (strain CC9605) protein is Enolase-phosphatase E1.